Reading from the N-terminus, the 35-residue chain is Bacteriocin SRCAM 1580 (35 aa).

It belongs to the bacteriocin class IIA/YGNGV family.

It localises to the secreted. Functionally, bacteriocin with antibacterial activity against C.jejuni. The polypeptide is Bacteriocin SRCAM 1580 (Niallia circulans (Bacillus circulans)).